Consider the following 351-residue polypeptide: Peptide chain release factor 1 (351 aa).

Position 230 is an N5-methylglutamine (Q230).

Belongs to the prokaryotic/mitochondrial release factor family. Post-translationally, methylated by PrmC. Methylation increases the termination efficiency of RF1.

The protein localises to the cytoplasm. Peptide chain release factor 1 directs the termination of translation in response to the peptide chain termination codons UAG and UAA. This Onion yellows phytoplasma (strain OY-M) protein is Peptide chain release factor 1.